The following is a 256-amino-acid chain: Stage 0 sporulation protein A homolog (256 aa).

The region spanning 5-123 (KVLIADDNRE…VLGNRLRQLA (119 aa)) is the Response regulatory domain. The Ca(2+) site is built by Asp-10, Asp-11, and Asp-56. Asp-56 is modified (4-aspartylphosphate). Residues 188–207 (PLIARKYMTTPSRVERAIRH) constitute a DNA-binding region (H-T-H motif).

Ca(2+) serves as cofactor.

It localises to the cytoplasm. Its function is as follows. May play the central regulatory role in sporulation. It may be an element of the effector pathway responsible for the activation of sporulation genes in response to nutritional stress. Spo0A may act in concert with spo0H (a sigma factor) to control the expression of some genes that are critical to the sporulation process. This is Stage 0 sporulation protein A homolog (spo0A) from Moorella thermoacetica (strain ATCC 39073 / JCM 9320).